A 292-amino-acid polypeptide reads, in one-letter code: 33 kDa chaperonin (292 aa).

2 disulfides stabilise this stretch: Cys-230–Cys-232 and Cys-263–Cys-266.

The protein belongs to the HSP33 family. Post-translationally, under oxidizing conditions two disulfide bonds are formed involving the reactive cysteines. Under reducing conditions zinc is bound to the reactive cysteines and the protein is inactive.

The protein localises to the cytoplasm. In terms of biological role, redox regulated molecular chaperone. Protects both thermally unfolding and oxidatively damaged proteins from irreversible aggregation. Plays an important role in the bacterial defense system toward oxidative stress. The sequence is that of 33 kDa chaperonin from Salmonella typhimurium (strain LT2 / SGSC1412 / ATCC 700720).